Here is a 233-residue protein sequence, read N- to C-terminus: 2-C-methyl-D-erythritol 4-phosphate cytidylyltransferase (233 aa).

It belongs to the IspD/TarI cytidylyltransferase family. IspD subfamily.

It carries out the reaction 2-C-methyl-D-erythritol 4-phosphate + CTP + H(+) = 4-CDP-2-C-methyl-D-erythritol + diphosphate. It functions in the pathway isoprenoid biosynthesis; isopentenyl diphosphate biosynthesis via DXP pathway; isopentenyl diphosphate from 1-deoxy-D-xylulose 5-phosphate: step 2/6. Functionally, catalyzes the formation of 4-diphosphocytidyl-2-C-methyl-D-erythritol from CTP and 2-C-methyl-D-erythritol 4-phosphate (MEP). The protein is 2-C-methyl-D-erythritol 4-phosphate cytidylyltransferase of Syntrophotalea carbinolica (strain DSM 2380 / NBRC 103641 / GraBd1) (Pelobacter carbinolicus).